A 523-amino-acid chain; its full sequence is Ribosomal protein uS12 methylthiotransferase RimO (523 aa).

Positions 7–134 (RRVALITLGC…IATHLAAVLA (128 aa)) constitute an MTTase N-terminal domain. [4Fe-4S] cluster contacts are provided by cysteine 16, cysteine 52, cysteine 97, cysteine 192, cysteine 196, and cysteine 199. The Radical SAM core domain occupies 178–409 (LTAGPVAVLK…DLVEQLTAAR (232 aa)). The TRAM domain occupies 411-492 (DARIGSRVQV…GVDLIAEFIA (82 aa)).

Belongs to the methylthiotransferase family. RimO subfamily. It depends on [4Fe-4S] cluster as a cofactor.

The protein localises to the cytoplasm. It catalyses the reaction L-aspartate(89)-[ribosomal protein uS12]-hydrogen + (sulfur carrier)-SH + AH2 + 2 S-adenosyl-L-methionine = 3-methylsulfanyl-L-aspartate(89)-[ribosomal protein uS12]-hydrogen + (sulfur carrier)-H + 5'-deoxyadenosine + L-methionine + A + S-adenosyl-L-homocysteine + 2 H(+). Catalyzes the methylthiolation of an aspartic acid residue of ribosomal protein uS12. This Frankia casuarinae (strain DSM 45818 / CECT 9043 / HFP020203 / CcI3) protein is Ribosomal protein uS12 methylthiotransferase RimO.